A 136-amino-acid polypeptide reads, in one-letter code: Small ribosomal subunit protein eS17A (136 aa).

This sequence belongs to the eukaryotic ribosomal protein eS17 family. As to quaternary structure, component of the small ribosomal subunit (SSU). Mature yeast ribosomes consist of a small (40S) and a large (60S) subunit. The 40S small subunit contains 1 molecule of ribosomal RNA (18S rRNA) and 33 different proteins (encoded by 57 genes). The large 60S subunit contains 3 rRNA molecules (25S, 5.8S and 5S rRNA) and 46 different proteins (encoded by 81 genes).

The protein resides in the cytoplasm. In terms of biological role, component of the ribosome, a large ribonucleoprotein complex responsible for the synthesis of proteins in the cell. The small ribosomal subunit (SSU) binds messenger RNAs (mRNAs) and translates the encoded message by selecting cognate aminoacyl-transfer RNA (tRNA) molecules. The large subunit (LSU) contains the ribosomal catalytic site termed the peptidyl transferase center (PTC), which catalyzes the formation of peptide bonds, thereby polymerizing the amino acids delivered by tRNAs into a polypeptide chain. The nascent polypeptides leave the ribosome through a tunnel in the LSU and interact with protein factors that function in enzymatic processing, targeting, and the membrane insertion of nascent chains at the exit of the ribosomal tunnel. The polypeptide is Small ribosomal subunit protein eS17A (Saccharomyces cerevisiae (strain ATCC 204508 / S288c) (Baker's yeast)).